Here is a 43-residue protein sequence, read N- to C-terminus: Protein PsbN (43 aa).

A helical transmembrane segment spans residues 7–27 (LIIFIASLLLGLTGYSIYTAF).

It belongs to the PsbN family.

Its subcellular location is the plastid. The protein localises to the chloroplast thylakoid membrane. Its function is as follows. May play a role in photosystem I and II biogenesis. This Guillardia theta (Cryptophyte) protein is Protein PsbN.